A 179-amino-acid chain; its full sequence is Gene 49 protein (179 aa).

Disordered regions lie at residues 1–38 (MKGNQLSYDDPWSTAPAQPEPAPAPEPETAPSATVTTA) and 102–137 (HYAGSGGSAPANGGGGGQQQSRAPQAAQEAPGGEKR). Pro residues predominate over residues 18 to 28 (QPEPAPAPEPE). The segment covering 29–38 (TAPSATVTTA) has biased composition (low complexity). Positions 104–119 (AGSGGSAPANGGGGGQ) are enriched in gly residues. Positions 120 to 132 (QQSRAPQAAQEAP) are enriched in low complexity.

The polypeptide is Gene 49 protein (49) (Mycobacterium (Mycobacteriophage L5)).